Here is a 347-residue protein sequence, read N- to C-terminus: NADH-ubiquinone oxidoreductase chain 2 (347 aa).

Helical transmembrane passes span 5–22 (ILITITSTVVLGTMIVLF), 26–45 (WFMIWVGFEMNMLAIIPILM), 60–80 (FLTQATASMLLMLSIIINLLC), 96–116 (TMITIALTMKLGLSPFHFWVP), 122–142 (ISLSSGMILLTWQKIAPLSIL), 153–173 (LLLMMAITSMLVGGWGGLNQT), 178–198 (ILAYSSITHMGWMAAIMVYNP), 200–220 (LAILNLTIYIMMTLGTFMLFM), 237–257 (FPLMAPLILMLMLSLGGLPPL), 274–294 (DMIIMPTLMAITALLNLYFYT), and 325–345 (LLAPLIVTSTMLLPLTPMLAA).

Belongs to the complex I subunit 2 family. As to quaternary structure, core subunit of respiratory chain NADH dehydrogenase (Complex I) which is composed of 45 different subunits. Interacts with TMEM242.

Its subcellular location is the mitochondrion inner membrane. The enzyme catalyses a ubiquinone + NADH + 5 H(+)(in) = a ubiquinol + NAD(+) + 4 H(+)(out). Its function is as follows. Core subunit of the mitochondrial membrane respiratory chain NADH dehydrogenase (Complex I) which catalyzes electron transfer from NADH through the respiratory chain, using ubiquinone as an electron acceptor. Essential for the catalytic activity and assembly of complex I. The sequence is that of NADH-ubiquinone oxidoreductase chain 2 from Ailuropoda melanoleuca (Giant panda).